The sequence spans 129 residues: Ribonuclease P protein component (129 aa).

Belongs to the RnpA family. Consists of a catalytic RNA component (M1 or rnpB) and a protein subunit.

It carries out the reaction Endonucleolytic cleavage of RNA, removing 5'-extranucleotides from tRNA precursor.. Its function is as follows. RNaseP catalyzes the removal of the 5'-leader sequence from pre-tRNA to produce the mature 5'-terminus. It can also cleave other RNA substrates such as 4.5S RNA. The protein component plays an auxiliary but essential role in vivo by binding to the 5'-leader sequence and broadening the substrate specificity of the ribozyme. In Corynebacterium jeikeium (strain K411), this protein is Ribonuclease P protein component.